The primary structure comprises 483 residues: Allantoate deiminase 2 (483 aa).

The first 30 residues, 1–30, serve as a signal peptide directing secretion; the sequence is MSSATASNTFFLHSCFLLFCLLSAPSCVSM. Residues histidine 125, aspartate 136, glutamate 173, histidine 239, and histidine 457 each coordinate Mn(2+).

Belongs to the peptidase M20A family. Homodimer. The cofactor is Mn(2+). In terms of tissue distribution, expressed in stems and leaves, and at low levels in roots. Not detected in nodules.

The protein localises to the endoplasmic reticulum. The enzyme catalyses allantoate + H2O + 2 H(+) = (S)-2-ureidoglycine + NH4(+) + CO2. Involved in the catabolism of purine nucleotides. Can use allantoate as substrate. The sequential activity of AAH, UGLYAH and UAH allows a complete purine breakdown without the intermediate generation of urea. This is Allantoate deiminase 2 from Glycine max (Soybean).